We begin with the raw amino-acid sequence, 505 residues long: Actin nucleation-promoting factor WASL (505 aa).

Ser-2 bears the N-acetylserine mark. Residues 34–141 (LGKKCVTMSS…KAVTDLLGRR (108 aa)) enclose the WH1 domain. Disordered regions lie at residues 138 to 163 (LGRR…ATVD) and 184 to 205 (HTKE…DIGT). Over residues 186 to 198 (KEKKKGKAKKKRL) the composition is skewed to basic residues. Residues 203–216 (IGTPSNFQHIGHVG) enclose the CRIB domain. Phosphoserine; by TNK2 is present on Ser-242. At Tyr-256 the chain carries Phosphotyrosine; by FAK1 and TNK2. The segment at 266-406 (EAVKNELRRQ…HQVPTTAGNK (141 aa)) is disordered. 2 stretches are compositionally biased toward pro residues: residues 276-364 (APPP…PPPS) and 371-391 (VAPP…PPGL). Arg-307 bears the Omega-N-methylarginine mark. WH2 domains lie at 405–422 (NKAA…LKKV) and 433–450 (GRDA…LKSV). The tract at residues 476 to 505 (QKRSKAIHSSDEDEDEDDEEDFEDDDEWED) is disordered. A phosphoserine mark is found at Ser-484 and Ser-485. A compositionally biased stretch (acidic residues) spans 486 to 505 (DEDEDEDDEEDFEDDDEWED).

Binds actin and the Arp2/3 complex. Interacts with CDC42. Interacts with FCHSD1. Interacts with FCHSD2. Binds to SH3 domains of GRB2. Interacts with the C-terminal SH3 domain of DNMBP. Interacts with SNX9. Interacts with the WW domains of PRPF40A/FBP11. Interacts with PTK2/FAK1. Interacts with PACSIN1, PACSIN2 and PACSIN3. Interacts with NOSTRIN. Binds to TNK2. Interacts with SNX33. Interacts with NONO (via second RRM domain); the interaction is direct. Component of a multiprotein complex with NONO and SFPQ; associates with the complex via direct interaction with NONO. In terms of assembly, (Microbial infection) Interacts with E.coli effector protein EspF(U). Identified in a complex containing at least WASL, BAIAP2L1 and E.coli EspF(U). As to quaternary structure, (Microbial infection) Interacts with Shigella flexneri protein IcsA. The interaction with IcsA enhances the affinity of WASL for Arp2/3, thus assembling a tight complex which has maximal activity in actin assembly. Phosphorylation at Ser-242, Tyr-256, Ser-484 and Ser-485 enhances actin polymerization activity.

The protein localises to the cytoplasm. It localises to the cytoskeleton. Its subcellular location is the nucleus. Regulates actin polymerization by stimulating the actin-nucleating activity of the Arp2/3 complex. Involved in various processes, such as mitosis and cytokinesis, via its role in the regulation of actin polymerization. Together with CDC42, involved in the extension and maintenance of the formation of thin, actin-rich surface projections called filopodia. In addition to its role in the cytoplasm, also plays a role in the nucleus by regulating gene transcription, probably by promoting nuclear actin polymerization. Binds to HSF1/HSTF1 and forms a complex on heat shock promoter elements (HSE) that negatively regulates HSP90 expression. Plays a role in dendrite spine morphogenesis. Decreasing levels of DNMBP (using antisense RNA) alters apical junction morphology in cultured enterocytes, junctions curve instead of being nearly linear. The protein is Actin nucleation-promoting factor WASL (WASL) of Homo sapiens (Human).